The following is a 745-amino-acid chain: Junction plakoglobin (745 aa).

Methionine 1 is subject to N-acetylmethionine. The O-linked (GlcNAc) threonine glycan is linked to threonine 14. A phosphoserine mark is found at serine 99 and serine 125. ARM repeat units follow at residues 132–171, 172–215, 216–255, 258–297, 298–341, 342–381, 383–420, 423–464, 470–510, 512–551, 574–613, and 615–661; these read NYQD…QLSK, KEAS…LSHH, REGL…NLLL, EGAK…LLAY, GNQE…LSVC, PSNK…NLSD, ATKQ…NLTC, SKNK…HLTS, EMAQ…NLAL, PANH…QPYT, PMNR…ELAQ, and KEAA…PDYR. An interaction with DSC1 and DSG1 region spans residues 132–297; the sequence is NYQDDAELAT…TTDCLQLLAY (166 aa). A Phosphoserine modification is found at serine 182. The interaction with DSC1 stretch occupies residues 574–661; the sequence is PMNRMEIFRL…ISEDKNPDYR (88 aa). 2 positions are modified to phosphoserine: serine 665 and serine 730.

Belongs to the beta-catenin family. Homodimer. Component of an E-cadherin/catenin adhesion complex composed of at least E-cadherin/CDH1 and gamma-catenin/JUP, and possibly alpha-catenin/CTNNA1; the complex is located to adherens junctions. The stable association of CTNNA1 is controversial as CTNNA1 was shown not to bind to F-actin when assembled in the complex. Interacts with MUC1. Interacts with CAV1. Interacts with PTPRJ. Interacts with DSG1. Interacts with DSC1 and DSC2. Interacts with PKP2. Interacts with PKP3 (via N-terminus); the interaction is required for PKP3 localization to desmosome cell-cell junctions. Interacts with DSG4. In terms of processing, may be phosphorylated by FER.

It is found in the cell junction. Its subcellular location is the adherens junction. The protein resides in the desmosome. The protein localises to the cytoplasm. It localises to the cytoskeleton. It is found in the cell membrane. Its subcellular location is the nucleus. In terms of biological role, common junctional plaque protein. The membrane-associated plaques are architectural elements in an important strategic position to influence the arrangement and function of both the cytoskeleton and the cells within the tissue. The presence of plakoglobin in both the desmosomes and in the intermediate junctions suggests that it plays a central role in the structure and function of submembranous plaques. Acts as a substrate for VE-PTP and is required by it to stimulate VE-cadherin function in endothelial cells. Can replace beta-catenin in E-cadherin/catenin adhesion complexes which are proposed to couple cadherins to the actin cytoskeleton. The chain is Junction plakoglobin from Sus scrofa (Pig).